A 298-amino-acid polypeptide reads, in one-letter code: Arginine/serine-rich protein 1 (298 aa).

The interval Met-1 to Gln-135 is disordered. Ser-17 carries the post-translational modification Phosphoserine. Low complexity predominate over residues Ser-23–Ser-36. The segment covering Ser-60–Arg-105 has biased composition (basic residues). Phosphoserine occurs at positions 118 and 120. Basic residues predominate over residues Ser-124 to Gln-135. Arg-145 bears the Omega-N-methylarginine mark. 2 disordered regions span residues Arg-161 to Arg-181 and Ala-218 to Val-298. Polar residues predominate over residues Ser-219–Gly-228. Residues Lys-230–Ser-246 show a composition bias toward basic and acidic residues. The segment covering Glu-247–Thr-271 has biased composition (polar residues). Residues Ala-274–Lys-289 show a composition bias toward basic and acidic residues. Ser-282 carries the phosphoserine modification.

Belongs to the RSRP family. In terms of processing, phosphorylated. Phosphorylation at Ser-118 and Ser-120 mediates the interaction with spliceosome proteins.

The protein resides in the nucleus. Probably acts as a spliceosomal factor that contributes to spliceosome assembly and regulates the isoform switching of proteins such as PARP6. The protein is Arginine/serine-rich protein 1 (Rsrp1) of Mus musculus (Mouse).